The chain runs to 254 residues: Arginine transport ATP-binding protein ArgV (254 aa).

In terms of domain architecture, ABC transporter spans 6–250; that stretch reads IDAQQVCKNY…PKEQRTKDFL (245 aa). ATP is bound at residue 38 to 45; it reads GPSGSGKS.

It belongs to the ABC transporter superfamily. In terms of assembly, the complex is probably composed of two ATP-binding proteins (ArgV), two transmembrane proteins (ArgU) and a solute-binding protein (ArgT).

It is found in the cell membrane. It catalyses the reaction a polar amino acid(out) + ATP + H2O = a polar amino acid(in) + ADP + phosphate + H(+). The enzyme catalyses L-arginine(out) + ATP + H2O = L-arginine(in) + ADP + phosphate + H(+). In terms of biological role, part of the ABC transporter complex ArgTUV involved in L-arginine import. May also transport L-citrulline. Probably responsible for energy coupling to the transport system. In Corynebacterium glutamicum (strain ATCC 13032 / DSM 20300 / JCM 1318 / BCRC 11384 / CCUG 27702 / LMG 3730 / NBRC 12168 / NCIMB 10025 / NRRL B-2784 / 534), this protein is Arginine transport ATP-binding protein ArgV.